We begin with the raw amino-acid sequence, 711 residues long: Zinc finger protein 175 (711 aa).

Positions 1–11 are enriched in polar residues; it reads MPADVNLSQKP. The tract at residues 1-21 is disordered; that stretch reads MPADVNLSQKPQVLGPEKQDG. In terms of domain architecture, KRAB spans 27–98; the sequence is VSFEDVTVDF…EAEVSHQRCQ (72 aa). A C2H2-type 1; atypical zinc finger spans residues 279 to 301; sequence DGCSECGGSFTQKSHLFAQQRIH. A C2H2-type 2; atypical zinc finger spans residues 307–329; that stretch reads HECGKCGKAFMPQLKLSVYLTDH. The C2H2-type 3 zinc finger occupies 335–357; the sequence is CICKECGKVFIQRSELLTHQKTH. Residues 359-362 carry the Nuclear localization signal motif; that stretch reads RKKP. C2H2-type zinc fingers lie at residues 363 to 385, 391 to 413, 419 to 441, 447 to 469, 475 to 497, 503 to 525, 531 to 553, 559 to 581, 587 to 609, 615 to 637, 643 to 665, and 671 to 693; these read YKCH…QRTH, YECS…QKIH, YACS…QRIH, YVCI…QRSH, YQCH…HRIH, HVCS…QRIH, YKCS…QRIH, YVCT…QITH, FVCY…QRTH, YECL…QRIH, and YVCS…QTTH.

Belongs to the krueppel C2H2-type zinc-finger protein family. As to expression, ubiquitous.

The protein resides in the cytoplasm. Its subcellular location is the nucleus. Down-regulates the expression of several chemokine receptors. Interferes with HIV-1 replication by suppressing Tat-induced viral LTR promoter activity. This is Zinc finger protein 175 (ZNF175) from Homo sapiens (Human).